A 224-amino-acid chain; its full sequence is ATP synthase subunit a (224 aa).

Helical transmembrane passes span 17–37 (LSLN…IYWL), 72–92 (IFIS…FPYI), 99–119 (LTLT…YGWI), 125–145 (MFAH…MVCI), 155–175 (GTLA…LTLL), and 184–204 (YLLV…ESAV).

This sequence belongs to the ATPase A chain family. F-type ATPases have 2 components, CF(1) - the catalytic core - and CF(0) - the membrane proton channel. CF(1) has five subunits: alpha(3), beta(3), gamma(1), delta(1), epsilon(1). CF(0) has three main subunits: a, b and c.

It localises to the mitochondrion inner membrane. In terms of biological role, mitochondrial membrane ATP synthase (F(1)F(0) ATP synthase or Complex V) produces ATP from ADP in the presence of a proton gradient across the membrane which is generated by electron transport complexes of the respiratory chain. F-type ATPases consist of two structural domains, F(1) - containing the extramembraneous catalytic core and F(0) - containing the membrane proton channel, linked together by a central stalk and a peripheral stalk. During catalysis, ATP synthesis in the catalytic domain of F(1) is coupled via a rotary mechanism of the central stalk subunits to proton translocation. Key component of the proton channel; it may play a direct role in the translocation of protons across the membrane. The protein is ATP synthase subunit a (mt:ATPase6) of Drosophila yakuba (Fruit fly).